Consider the following 222-residue polypeptide: UPF0758 protein YicR (222 aa).

An MPN domain is found at 100-222; that stretch reads PLLSPEMTRE…YVSFAERGWI (123 aa). Residues His171, His173, and Asp184 each contribute to the Zn(2+) site. The JAMM motif motif lies at 171–184; the sequence is HNHPSGCAEPSKAD.

This sequence belongs to the UPF0758 family. YicR subfamily.

The polypeptide is UPF0758 protein YicR (Escherichia coli O9:H4 (strain HS)).